The chain runs to 354 residues: Ferrochelatase (354 aa).

Fe cation is bound by residues His-214 and Glu-295.

This sequence belongs to the ferrochelatase family.

It is found in the cytoplasm. It catalyses the reaction heme b + 2 H(+) = protoporphyrin IX + Fe(2+). It participates in porphyrin-containing compound metabolism; protoheme biosynthesis; protoheme from protoporphyrin-IX: step 1/1. Catalyzes the ferrous insertion into protoporphyrin IX. This Burkholderia vietnamiensis (strain G4 / LMG 22486) (Burkholderia cepacia (strain R1808)) protein is Ferrochelatase.